The primary structure comprises 163 residues: Superoxide dismutase [Mn] (163 aa).

His2, His50, Asp134, and His138 together coordinate Mn(2+).

It belongs to the iron/manganese superoxide dismutase family. It depends on Mn(2+) as a cofactor.

The catalysed reaction is 2 superoxide + 2 H(+) = H2O2 + O2. Functionally, destroys superoxide anion radicals which are normally produced within the cells and which are toxic to biological systems. This Mycobacterium kansasii protein is Superoxide dismutase [Mn] (sodA).